Here is a 262-residue protein sequence, read N- to C-terminus: 3-methyl-2-oxobutanoate hydroxymethyltransferase (262 aa).

2 residues coordinate Mg(2+): Asp-43 and Asp-82. 3-methyl-2-oxobutanoate-binding positions include 43 to 44 (DS), Asp-82, and Lys-110. Position 112 (Glu-112) interacts with Mg(2+). Glu-179 acts as the Proton acceptor in catalysis.

This sequence belongs to the PanB family. Homodecamer; pentamer of dimers. Mg(2+) serves as cofactor.

It localises to the cytoplasm. It catalyses the reaction 3-methyl-2-oxobutanoate + (6R)-5,10-methylene-5,6,7,8-tetrahydrofolate + H2O = 2-dehydropantoate + (6S)-5,6,7,8-tetrahydrofolate. The protein operates within cofactor biosynthesis; (R)-pantothenate biosynthesis; (R)-pantoate from 3-methyl-2-oxobutanoate: step 1/2. Catalyzes the reversible reaction in which hydroxymethyl group from 5,10-methylenetetrahydrofolate is transferred onto alpha-ketoisovalerate to form ketopantoate. The protein is 3-methyl-2-oxobutanoate hydroxymethyltransferase of Sodalis glossinidius (strain morsitans).